Consider the following 195-residue polypeptide: Probable GTP-binding protein EngB (195 aa).

Residues 22–194 (LKGEVAFVGR…LDLISTLLKE (173 aa)) form the EngB-type G domain. GTP contacts are provided by residues 30–37 (GRSNVGKS), 56–60 (GKTRS), 74–77 (DLPG), 141–144 (TKMD), and 173–175 (TSS). Mg(2+)-binding residues include serine 37 and threonine 58.

It belongs to the TRAFAC class TrmE-Era-EngA-EngB-Septin-like GTPase superfamily. EngB GTPase family. Requires Mg(2+) as cofactor.

Functionally, necessary for normal cell division and for the maintenance of normal septation. This is Probable GTP-binding protein EngB from Thermotoga maritima (strain ATCC 43589 / DSM 3109 / JCM 10099 / NBRC 100826 / MSB8).